A 184-amino-acid polypeptide reads, in one-letter code: ATP synthase subunit b, chloroplastic (184 aa).

The helical transmembrane segment at 31–49 threads the bilayer; it reads IINSSVVLSVLIYFGKGVL.

The protein belongs to the ATPase B chain family. F-type ATPases have 2 components, F(1) - the catalytic core - and F(0) - the membrane proton channel. F(1) has five subunits: alpha(3), beta(3), gamma(1), delta(1), epsilon(1). F(0) has four main subunits: a(1), b(1), b'(1) and c(10-14). The alpha and beta chains form an alternating ring which encloses part of the gamma chain. F(1) is attached to F(0) by a central stalk formed by the gamma and epsilon chains, while a peripheral stalk is formed by the delta, b and b' chains.

It localises to the plastid. The protein localises to the chloroplast thylakoid membrane. Its function is as follows. F(1)F(0) ATP synthase produces ATP from ADP in the presence of a proton or sodium gradient. F-type ATPases consist of two structural domains, F(1) containing the extramembraneous catalytic core and F(0) containing the membrane proton channel, linked together by a central stalk and a peripheral stalk. During catalysis, ATP synthesis in the catalytic domain of F(1) is coupled via a rotary mechanism of the central stalk subunits to proton translocation. In terms of biological role, component of the F(0) channel, it forms part of the peripheral stalk, linking F(1) to F(0). This Pinus thunbergii (Japanese black pine) protein is ATP synthase subunit b, chloroplastic.